We begin with the raw amino-acid sequence, 447 residues long: N-succinylarginine dihydrolase (447 aa).

Substrate-binding positions include 19-28 (AGLSFGNEAS), N110, and 137-138 (HR). Residue E174 is part of the active site. Substrate is bound at residue R213. The active site involves H249. D251 and N364 together coordinate substrate. The active-site Nucleophile is C370.

Belongs to the succinylarginine dihydrolase family. In terms of assembly, homodimer.

The enzyme catalyses N(2)-succinyl-L-arginine + 2 H2O + 2 H(+) = N(2)-succinyl-L-ornithine + 2 NH4(+) + CO2. The protein operates within amino-acid degradation; L-arginine degradation via AST pathway; L-glutamate and succinate from L-arginine: step 2/5. Functionally, catalyzes the hydrolysis of N(2)-succinylarginine into N(2)-succinylornithine, ammonia and CO(2). The polypeptide is N-succinylarginine dihydrolase (Yersinia enterocolitica serotype O:8 / biotype 1B (strain NCTC 13174 / 8081)).